A 323-amino-acid polypeptide reads, in one-letter code: tRNA dimethylallyltransferase (323 aa).

12–19 lines the ATP pocket; sequence GPTAAGKT. 14-19 serves as a coordination point for substrate; sequence TAAGKT. Interaction with substrate tRNA stretches follow at residues 37–40 and 161–165; these read DSAL and QRLMR.

The protein belongs to the IPP transferase family. As to quaternary structure, monomer. Requires Mg(2+) as cofactor.

The enzyme catalyses adenosine(37) in tRNA + dimethylallyl diphosphate = N(6)-dimethylallyladenosine(37) in tRNA + diphosphate. In terms of biological role, catalyzes the transfer of a dimethylallyl group onto the adenine at position 37 in tRNAs that read codons beginning with uridine, leading to the formation of N6-(dimethylallyl)adenosine (i(6)A). In Pseudomonas paraeruginosa (strain DSM 24068 / PA7) (Pseudomonas aeruginosa (strain PA7)), this protein is tRNA dimethylallyltransferase.